The following is a 253-amino-acid chain: Isoprenyl transferase (253 aa).

Asp-30 is a catalytic residue. Residue Asp-30 coordinates Mg(2+). Substrate contacts are provided by residues 31–34 (GNRR), Trp-35, His-51, and 79–81 (STE). Asn-82 acts as the Proton acceptor in catalysis. Substrate-binding positions include Phe-83, Arg-85, Arg-202, and 208–210 (RVS). Mg(2+) is bound at residue Glu-221.

This sequence belongs to the UPP synthase family. As to quaternary structure, homodimer. Requires Mg(2+) as cofactor.

Catalyzes the condensation of isopentenyl diphosphate (IPP) with allylic pyrophosphates generating different type of terpenoids. This Chlamydia trachomatis serovar D (strain ATCC VR-885 / DSM 19411 / UW-3/Cx) protein is Isoprenyl transferase.